Reading from the N-terminus, the 356-residue chain is MTTPTTAPSGCRSDLDSRYHRLCDLAEGWGIALETLAAVGAVATVACMFALVFLICKVQDSNKRKMLPAQFLFLLGVLGVFGLTFAFIIKLDGATGPTRFFLFGVLFAICFSCLLAHAFNLIKLVRGRKPLSWLVILSLAVGFSLVQDVIAIEYLVLTMNRTNVNVFSELPAPRRNEDFVMLLIYVLVLMVLTFFTSFLVFCGSFSGWKRHGFHICFTSFLSIAIWVAWIVLLLIPDIDRKWDDTILSTALVANGWVFLAFYILPEFRQLPRQRSPTDYPVEDAFCKPQLMKQSYGVENRAYSQEEITQGLEMGDTLYAPYSTHFQLQNHQKDFSIPRAQAPASPYNDYEGRKGDS.

Residues 1–35 lie on the Extracellular side of the membrane; that stretch reads MTTPTTAPSGCRSDLDSRYHRLCDLAEGWGIALET. A helical transmembrane segment spans residues 36 to 56; sequence LAAVGAVATVACMFALVFLIC. Residues 57–68 lie on the Cytoplasmic side of the membrane; it reads KVQDSNKRKMLP. A helical transmembrane segment spans residues 69 to 89; it reads AQFLFLLGVLGVFGLTFAFII. Residues 90–101 are Extracellular-facing; it reads KLDGATGPTRFF. Residues 102-122 traverse the membrane as a helical segment; the sequence is LFGVLFAICFSCLLAHAFNLI. Residues 123–131 lie on the Cytoplasmic side of the membrane; it reads KLVRGRKPL. Residues 132 to 152 form a helical membrane-spanning segment; that stretch reads SWLVILSLAVGFSLVQDVIAI. The Extracellular segment spans residues 153–178; that stretch reads EYLVLTMNRTNVNVFSELPAPRRNED. Asn160 carries an N-linked (GlcNAc...) asparagine glycan. The helical transmembrane segment at 179–199 threads the bilayer; it reads FVMLLIYVLVLMVLTFFTSFL. At 200 to 214 the chain is on the cytoplasmic side; it reads VFCGSFSGWKRHGFH. The chain crosses the membrane as a helical span at residues 215 to 235; sequence ICFTSFLSIAIWVAWIVLLLI. The Extracellular segment spans residues 236-244; sequence PDIDRKWDD. A helical membrane pass occupies residues 245-265; that stretch reads TILSTALVANGWVFLAFYILP. Topologically, residues 266–356 are cytoplasmic; it reads EFRQLPRQRS…NDYEGRKGDS (91 aa). Ser303 bears the Phosphoserine mark. Phosphotyrosine occurs at positions 318 and 321. A disordered region spans residues 336-356; sequence IPRAQAPASPYNDYEGRKGDS. Ser344 is modified (phosphoserine). 2 positions are modified to phosphotyrosine: Tyr346 and Tyr349.

Belongs to the G-protein coupled receptor 3 family. In terms of assembly, interacts (via its transmembrane domain) with EGFR. In terms of processing, phosphorylated in two conserved double-tyrosine motifs, Tyr 318/Tyr-321 and Tyr-346/Tyr-349 by EGFR. Tyr-318 and Tyr-321 are the preferred residues responsible for EGFR-mediated GPRC5A phosphorylation. As to expression, expressed predominantly in normal fetal and adult lung. Almost undetectable or expressed at very low levels in other tissues.

Its subcellular location is the cell membrane. Orphan receptor. Could be involved in modulating differentiation and maintaining homeostasis of epithelial cells. This retinoic acid-inducible GPCR provides evidence for a possible interaction between retinoid and G-protein signaling pathways. Functions as a negative modulator of EGFR signaling. Acts as a lung tumor suppressor. In Mus musculus (Mouse), this protein is Retinoic acid-induced protein 3 (Gprc5a).